The primary structure comprises 196 residues: Small ribosomal subunit protein uS4c (196 aa).

One can recognise an S4 RNA-binding domain in the interval 89–169 (MRLDNIIFRL…LPKHLTIDTV (81 aa)).

It belongs to the universal ribosomal protein uS4 family. Part of the 30S ribosomal subunit. Contacts protein S5. The interaction surface between S4 and S5 is involved in control of translational fidelity.

The protein resides in the plastid. The protein localises to the chloroplast. Functionally, one of the primary rRNA binding proteins, it binds directly to 16S rRNA where it nucleates assembly of the body of the 30S subunit. With S5 and S12 plays an important role in translational accuracy. This chain is Small ribosomal subunit protein uS4c (rps4), found in Stipellula capensis (Cape rice grass).